Reading from the N-terminus, the 202-residue chain is Probable nicotinate-nucleotide adenylyltransferase (202 aa).

The protein belongs to the NadD family.

It carries out the reaction nicotinate beta-D-ribonucleotide + ATP + H(+) = deamido-NAD(+) + diphosphate. Its pathway is cofactor biosynthesis; NAD(+) biosynthesis; deamido-NAD(+) from nicotinate D-ribonucleotide: step 1/1. Its function is as follows. Catalyzes the reversible adenylation of nicotinate mononucleotide (NaMN) to nicotinic acid adenine dinucleotide (NaAD). In Clostridium perfringens (strain SM101 / Type A), this protein is Probable nicotinate-nucleotide adenylyltransferase.